The primary structure comprises 507 residues: Protein FAM221B (507 aa).

Disordered stretches follow at residues Met-1–Ser-100, Leu-154–Pro-310, and Glu-486–Phe-507. Positions Asn-88 to Ser-100 are enriched in polar residues. Positions Ser-167–Glu-177 are enriched in acidic residues. The segment covering Ala-182 to Asp-193 has biased composition (polar residues). 2 stretches are compositionally biased toward acidic residues: residues Pro-208 to Leu-222 and Ser-270 to Leu-281. Ser-270 carries the phosphoserine modification.

Belongs to the FAM221 family.

The protein is Protein FAM221B (Fam221b) of Rattus norvegicus (Rat).